The chain runs to 461 residues: Bifunctional protein HldE (461 aa).

The ribokinase stretch occupies residues 1 to 312 (MLEFLSQQKP…IRSFKSMSFE (312 aa)). Residue 191–194 (NKKE) participates in ATP binding. D259 is a catalytic residue. Positions 334-461 (FTNGCFDIVH…KIIEKIKDKK (128 aa)) are cytidylyltransferase.

It in the N-terminal section; belongs to the carbohydrate kinase PfkB family. This sequence in the C-terminal section; belongs to the cytidylyltransferase family. As to quaternary structure, homodimer.

The enzyme catalyses D-glycero-beta-D-manno-heptose 7-phosphate + ATP = D-glycero-beta-D-manno-heptose 1,7-bisphosphate + ADP + H(+). It catalyses the reaction D-glycero-beta-D-manno-heptose 1-phosphate + ATP + H(+) = ADP-D-glycero-beta-D-manno-heptose + diphosphate. The protein operates within nucleotide-sugar biosynthesis; ADP-L-glycero-beta-D-manno-heptose biosynthesis; ADP-L-glycero-beta-D-manno-heptose from D-glycero-beta-D-manno-heptose 7-phosphate: step 1/4. Its pathway is nucleotide-sugar biosynthesis; ADP-L-glycero-beta-D-manno-heptose biosynthesis; ADP-L-glycero-beta-D-manno-heptose from D-glycero-beta-D-manno-heptose 7-phosphate: step 3/4. In terms of biological role, catalyzes the phosphorylation of D-glycero-D-manno-heptose 7-phosphate at the C-1 position to selectively form D-glycero-beta-D-manno-heptose-1,7-bisphosphate. Functionally, catalyzes the ADP transfer from ATP to D-glycero-beta-D-manno-heptose 1-phosphate, yielding ADP-D-glycero-beta-D-manno-heptose. The chain is Bifunctional protein HldE from Campylobacter jejuni (strain RM1221).